A 323-amino-acid polypeptide reads, in one-letter code: Formyl peptide receptor-related sequence 4 (323 aa).

At methionine 1–serine 29 the chain is on the extracellular side. Asparagine 4 and asparagine 10 each carry an N-linked (GlcNAc...) asparagine glycan. A helical transmembrane segment spans residues leucine 30–valine 50. The Cytoplasmic portion of the chain corresponds to alanine 51–asparagine 66. Residues leucine 67 to methionine 87 form a helical membrane-spanning segment. Residues arginine 88–lysine 99 are Extracellular-facing. Cysteine 98 and cysteine 176 form a disulfide bridge. The chain crosses the membrane as a helical span at residues leucine 100–alanine 120. Residues methionine 121–lysine 144 lie on the Cytoplasmic side of the membrane. The chain crosses the membrane as a helical span at residues valine 145–threonine 165. Residues threonine 166–glycine 202 are Extracellular-facing. The chain crosses the membrane as a helical span at residues isoleucine 203–leucine 223. At methionine 224–arginine 241 the chain is on the cytoplasmic side. Residues valine 242–leucine 262 form a helical membrane-spanning segment. Topologically, residues leucine 263–asparagine 280 are extracellular. N-linked (GlcNAc...) asparagine glycosylation is present at asparagine 269. The chain crosses the membrane as a helical span at residues proline 281–glycine 301. Residues glutamine 302–aspartate 323 are Cytoplasmic-facing.

It belongs to the G-protein coupled receptor 1 family. Expressed in 0.6 % of a subset of sensory neurons located in the apical layer of the vomeronasal organ. Each neuron appears to express only one receptor gene.

It localises to the cell membrane. Functionally, may have an olfactory function associated with the identification of pathogens or of pathogenic states. The chain is Formyl peptide receptor-related sequence 4 (Fpr-rs4) from Mus musculus (Mouse).